A 156-amino-acid polypeptide reads, in one-letter code: Methylated-DNA--protein-cysteine methyltransferase (156 aa).

Residue cysteine 126 is the Nucleophile; methyl group acceptor of the active site.

Belongs to the MGMT family.

It localises to the cytoplasm. The catalysed reaction is a 6-O-methyl-2'-deoxyguanosine in DNA + L-cysteinyl-[protein] = S-methyl-L-cysteinyl-[protein] + a 2'-deoxyguanosine in DNA. It catalyses the reaction a 4-O-methyl-thymidine in DNA + L-cysteinyl-[protein] = a thymidine in DNA + S-methyl-L-cysteinyl-[protein]. In terms of biological role, involved in the cellular defense against the biological effects of O6-methylguanine (O6-MeG) and O4-methylthymine (O4-MeT) in DNA. Repairs the methylated nucleobase in DNA by stoichiometrically transferring the methyl group to a cysteine residue in the enzyme. This is a suicide reaction: the enzyme is irreversibly inactivated. The polypeptide is Methylated-DNA--protein-cysteine methyltransferase (Methanosarcina acetivorans (strain ATCC 35395 / DSM 2834 / JCM 12185 / C2A)).